The primary structure comprises 290 residues: Agmatinase (290 aa).

6 residues coordinate Mn(2+): His112, Asp135, His137, Asp139, Asp216, and Asp218.

It belongs to the arginase family. Agmatinase subfamily. Mn(2+) is required as a cofactor.

The enzyme catalyses agmatine + H2O = urea + putrescine. It functions in the pathway amine and polyamine biosynthesis; putrescine biosynthesis via agmatine pathway; putrescine from agmatine: step 1/1. Its function is as follows. Catalyzes the formation of putrescine from agmatine. This is Agmatinase (speB) from Bacillus anthracis.